The following is a 244-amino-acid chain: 3-deoxy-manno-octulosonate cytidylyltransferase (244 aa).

This sequence belongs to the KdsB family.

Its subcellular location is the cytoplasm. The catalysed reaction is 3-deoxy-alpha-D-manno-oct-2-ulosonate + CTP = CMP-3-deoxy-beta-D-manno-octulosonate + diphosphate. Its pathway is nucleotide-sugar biosynthesis; CMP-3-deoxy-D-manno-octulosonate biosynthesis; CMP-3-deoxy-D-manno-octulosonate from 3-deoxy-D-manno-octulosonate and CTP: step 1/1. It participates in bacterial outer membrane biogenesis; lipopolysaccharide biosynthesis. Its function is as follows. Activates KDO (a required 8-carbon sugar) for incorporation into bacterial lipopolysaccharide in Gram-negative bacteria. This is 3-deoxy-manno-octulosonate cytidylyltransferase from Dichelobacter nodosus (strain VCS1703A).